The primary structure comprises 608 residues: Alpha-glycerophosphate oxidase (608 aa).

21 to 49 (DLLIIGGGITGAGVALQAAASGLETGLIE) contributes to the FAD binding site. The segment at 393–418 (SAVSKLESSTSEKHLDPSAVSRGSSL) is disordered.

This sequence belongs to the FAD-dependent glycerol-3-phosphate dehydrogenase family. FAD serves as cofactor.

The protein resides in the cell membrane. It carries out the reaction sn-glycerol 3-phosphate + O2 = dihydroxyacetone phosphate + H2O2. It functions in the pathway membrane lipid metabolism; glycerophospholipid metabolism. In Streptococcus pneumoniae serotype 4 (strain ATCC BAA-334 / TIGR4), this protein is Alpha-glycerophosphate oxidase (glpO).